Consider the following 405-residue polypeptide: Arginine biosynthesis bifunctional protein ArgJ, mitochondrial (405 aa).

4 residues coordinate substrate: Thr-174, Lys-200, Thr-211, and Glu-300. The active-site Nucleophile is Thr-211.

It belongs to the ArgJ family. In terms of assembly, heterodimer of an alpha and a beta chain. The alpha and beta chains are autoproteolytically processed from a single precursor protein within the mitochondrion.

It localises to the mitochondrion matrix. The enzyme catalyses N(2)-acetyl-L-ornithine + L-glutamate = N-acetyl-L-glutamate + L-ornithine. It catalyses the reaction L-glutamate + acetyl-CoA = N-acetyl-L-glutamate + CoA + H(+). It functions in the pathway amino-acid biosynthesis; L-arginine biosynthesis; L-ornithine and N-acetyl-L-glutamate from L-glutamate and N(2)-acetyl-L-ornithine (cyclic): step 1/1. It participates in amino-acid biosynthesis; L-arginine biosynthesis; N(2)-acetyl-L-ornithine from L-glutamate: step 1/4. In terms of biological role, catalyzes two activities which are involved in the cyclic version of arginine biosynthesis: the synthesis of acetylglutamate from glutamate and acetyl-CoA, and of ornithine by transacetylation between acetylornithine and glutamate. This is Arginine biosynthesis bifunctional protein ArgJ, mitochondrial from Candida tropicalis (strain ATCC MYA-3404 / T1) (Yeast).